Reading from the N-terminus, the 525-residue chain is GMP synthase [glutamine-hydrolyzing] (525 aa).

Residues 8-207 (KILILDFGSQ…ALEICGCPAN (200 aa)) enclose the Glutamine amidotransferase type-1 domain. The active-site Nucleophile is Cys-85. Catalysis depends on residues His-181 and Glu-183. The GMPS ATP-PPase domain maps to 208 to 400 (WKPSSIIEDA…LGLPYDMLYR (193 aa)). 235–241 (SGGVDSS) is a binding site for ATP.

As to quaternary structure, homodimer.

The catalysed reaction is XMP + L-glutamine + ATP + H2O = GMP + L-glutamate + AMP + diphosphate + 2 H(+). It functions in the pathway purine metabolism; GMP biosynthesis; GMP from XMP (L-Gln route): step 1/1. Functionally, catalyzes the synthesis of GMP from XMP. This is GMP synthase [glutamine-hydrolyzing] from Shewanella pealeana (strain ATCC 700345 / ANG-SQ1).